The chain runs to 534 residues: UDP-glucuronosyltransferase 1A4 (534 aa).

A signal peptide spans 1–28; that stretch reads MARGLQVPLPRLATGLLLLLSVQPWAES. N-linked (GlcNAc...) asparagine glycans are attached at residues Asn-119, Asn-142, Asn-296, and Asn-348. A helical transmembrane segment spans residues 492 to 508; it reads VIGFLLAVVLTVAFITF.

Belongs to the UDP-glycosyltransferase family. As to quaternary structure, homodimer. Homooligomer. Interacts with UGT1A1, UGT1A3, UGT1A6, UGT1A7, UGT1A8, UGT1A9 and UGT1A10 to form heterodimers. Isoform 1 interacts with isoform 2/i2 suggesting that oligomerization is involved in negative regulation of transferase activity by isoform 2. Isoform 1 also interacts with respective i2 isoforms of UGT1A1, UGT1A3, UGT1A6, UGT1A7, UGT1A8, UGT1A9 and UGT1A10. In terms of tissue distribution, expressed in liver. Expressed in kidney, colon and small intestine. Not expressed in esophagus. Not expressed in skin. As to expression, expressed in liver, kidney, colon, esophagus and small intestine.

The protein localises to the endoplasmic reticulum membrane. It catalyses the reaction glucuronate acceptor + UDP-alpha-D-glucuronate = acceptor beta-D-glucuronoside + UDP + H(+). The catalysed reaction is calcidiol + UDP-alpha-D-glucuronate = calcidiol 25-O-(beta-D-glucuronide) + UDP + H(+). It carries out the reaction calcidiol + UDP-alpha-D-glucuronate = calcidiol 3-O-(beta-D-glucuronide) + UDP + H(+). The enzyme catalyses calcitriol + UDP-alpha-D-glucuronate = calcitriol 25-O-(beta-D-glucuronide) + UDP + H(+). It catalyses the reaction (5Z,8Z,11Z,14Z)-eicosatetraenoate + UDP-alpha-D-glucuronate = O-[(5Z),(8Z),(11Z),(14Z)-eicosatetraenoyl]-beta-D-glucuronate + UDP. The catalysed reaction is 15-hydroxy-(5Z,8Z,11Z,13E)-eicosatetraenoate + UDP-alpha-D-glucuronate = 15-O-(beta-D-glucuronosyl)-(5Z,8Z,11Z,14Z)-eicosatetraenoate + UDP + H(+). It carries out the reaction 20-hydroxy-(5Z,8Z,11Z,14Z)-eicosatetraenoate + UDP-alpha-D-glucuronate = 20-O-(beta-D-glucuronosyl)-(5Z,8Z,11Z,14Z)-eicosatetraenoate + UDP + H(+). In terms of biological role, UDP-glucuronosyltransferase (UGT) that catalyzes phase II biotransformation reactions in which lipophilic substrates are conjugated with glucuronic acid to increase the metabolite's water solubility, thereby facilitating excretion into either the urine or bile. Essential for the elimination and detoxification of drugs, xenobiotics and endogenous compounds. Involved in the glucuronidation of calcidiol, which is the major circulating form of vitamin D3 essential for the regulation of calcium and phosphate homeostasis. Also glucuronidates the biologically active form of vitamin D3, calcitriol, probably leading to its biliary transport and intestinal reabsorption. Involved in the glucuronidation of arachidonic acid (AA) and AA-derived eicosanoids including 15-HETE, 20-HETE and PGB1. Its function is as follows. Lacks UDP-glucuronosyltransferase (UGT) activity but acts as a negative regulator of isoform 1. The protein is UDP-glucuronosyltransferase 1A4 of Homo sapiens (Human).